We begin with the raw amino-acid sequence, 396 residues long: Phosphoglycerate kinase (396 aa).

Residues 21 to 23, Arg-36, 59 to 62, Arg-118, and Arg-151 each bind substrate; these read DFN and HLGR. Residues Lys-201, Gly-292, Glu-323, and 349–352 contribute to the ATP site; that span reads GGDS.

It belongs to the phosphoglycerate kinase family. Monomer.

It is found in the cytoplasm. The catalysed reaction is (2R)-3-phosphoglycerate + ATP = (2R)-3-phospho-glyceroyl phosphate + ADP. It functions in the pathway carbohydrate degradation; glycolysis; pyruvate from D-glyceraldehyde 3-phosphate: step 2/5. The polypeptide is Phosphoglycerate kinase (Leptospira interrogans serogroup Icterohaemorrhagiae serovar Lai (strain 56601)).